A 250-amino-acid polypeptide reads, in one-letter code: Triosephosphate isomerase (250 aa).

Residue 9–11 (NWK) participates in substrate binding. Histidine 95 serves as the catalytic Electrophile. The active-site Proton acceptor is the glutamate 167. Substrate is bound by residues glycine 173, serine 213, and 234–235 (GG).

It belongs to the triosephosphate isomerase family. Homodimer.

The protein resides in the cytoplasm. It carries out the reaction D-glyceraldehyde 3-phosphate = dihydroxyacetone phosphate. The protein operates within carbohydrate biosynthesis; gluconeogenesis. It functions in the pathway carbohydrate degradation; glycolysis; D-glyceraldehyde 3-phosphate from glycerone phosphate: step 1/1. Involved in the gluconeogenesis. Catalyzes stereospecifically the conversion of dihydroxyacetone phosphate (DHAP) to D-glyceraldehyde-3-phosphate (G3P). The polypeptide is Triosephosphate isomerase (Flavobacterium johnsoniae (strain ATCC 17061 / DSM 2064 / JCM 8514 / BCRC 14874 / CCUG 350202 / NBRC 14942 / NCIMB 11054 / UW101) (Cytophaga johnsonae)).